The following is a 599-amino-acid chain: Aspartate--tRNA(Asp/Asn) ligase (599 aa).

Glu174 provides a ligand contact to L-aspartate. The interval 198 to 201 (QLFK) is aspartate. Residue Arg220 coordinates L-aspartate. ATP is bound by residues 220 to 222 (RDE) and Gln229. Position 457 (His457) interacts with L-aspartate. Residue Glu491 participates in ATP binding. Residue Arg498 coordinates L-aspartate. 543-546 (GLDR) provides a ligand contact to ATP.

The protein belongs to the class-II aminoacyl-tRNA synthetase family. Type 1 subfamily. As to quaternary structure, homodimer.

The protein localises to the cytoplasm. The enzyme catalyses tRNA(Asx) + L-aspartate + ATP = L-aspartyl-tRNA(Asx) + AMP + diphosphate. In terms of biological role, aspartyl-tRNA synthetase with relaxed tRNA specificity since it is able to aspartylate not only its cognate tRNA(Asp) but also tRNA(Asn). Reaction proceeds in two steps: L-aspartate is first activated by ATP to form Asp-AMP and then transferred to the acceptor end of tRNA(Asp/Asn). This is Aspartate--tRNA(Asp/Asn) ligase from Paraburkholderia phytofirmans (strain DSM 17436 / LMG 22146 / PsJN) (Burkholderia phytofirmans).